Consider the following 349-residue polypeptide: Aspartate carbamoyltransferase catalytic subunit (349 aa).

Carbamoyl phosphate contacts are provided by R59 and T60. K87 serves as a coordination point for L-aspartate. R109, H142, and Q145 together coordinate carbamoyl phosphate. L-aspartate contacts are provided by R182 and R253. Positions 294 and 295 each coordinate carbamoyl phosphate.

Belongs to the aspartate/ornithine carbamoyltransferase superfamily. ATCase family. As to quaternary structure, heterododecamer (2C3:3R2) of six catalytic PyrB chains organized as two trimers (C3), and six regulatory PyrI chains organized as three dimers (R2).

It carries out the reaction carbamoyl phosphate + L-aspartate = N-carbamoyl-L-aspartate + phosphate + H(+). It functions in the pathway pyrimidine metabolism; UMP biosynthesis via de novo pathway; (S)-dihydroorotate from bicarbonate: step 2/3. Functionally, catalyzes the condensation of carbamoyl phosphate and aspartate to form carbamoyl aspartate and inorganic phosphate, the committed step in the de novo pyrimidine nucleotide biosynthesis pathway. This chain is Aspartate carbamoyltransferase catalytic subunit, found in Synechococcus sp. (strain CC9311).